Consider the following 139-residue polypeptide: Autophagy-related protein 31 (139 aa).

It belongs to the ATG31 family. As to quaternary structure, forms a stable complex with ATG17 and ATG29. Interacts directly with ATG29. The ATG17-ATG29-ATG31 complex interacts with the ATG1-ATG13 complex. Note=The interaction with the ATG1-ATG13 complex is induced by starvation.

It localises to the preautophagosomal structure. Its function is as follows. Plays a role in starvation-induced autophagy. Involved in mitophagy. Functions with ATG17 and ATG29 at the preautophagosomal structure (PAS) in order to form normal autophagosomes under starvation conditions. This Kluyveromyces marxianus (strain DMKU3-1042 / BCC 29191 / NBRC 104275) (Yeast) protein is Autophagy-related protein 31.